Here is a 343-residue protein sequence, read N- to C-terminus: Cell division protein ZipA (343 aa).

The Periplasmic portion of the chain corresponds to 1–4 (MDLN). Residues 5–25 (TILIILGILALIGLVAHGIWS) traverse the membrane as a helical segment. The Cytoplasmic portion of the chain corresponds to 26–343 (NRREKSQYFD…MAEAAYLARV (318 aa)). The interval 39 to 98 (AFHRNPQSTGRPSAQASQPMTPNFAQPAKETEQIRQTYQEPQVRQMSSSPEQQTRPTAQA) is disordered. Polar residues-rich tracts occupy residues 43-62 (NPQS…TPNF) and 72-95 (IRQT…TRPT).

This sequence belongs to the ZipA family. In terms of assembly, interacts with FtsZ via their C-terminal domains.

Its subcellular location is the cell inner membrane. Its function is as follows. Essential cell division protein that stabilizes the FtsZ protofilaments by cross-linking them and that serves as a cytoplasmic membrane anchor for the Z ring. Also required for the recruitment to the septal ring of downstream cell division proteins. The protein is Cell division protein ZipA of Actinobacillus succinogenes (strain ATCC 55618 / DSM 22257 / CCUG 43843 / 130Z).